The following is a 508-amino-acid chain: MGLPWYRVHTVVLNDPGRLLSVHIMHTALVSGWAGSMALYELAVFDPSDPVLDPMWRQGMFVIPFMTRLGITNSWGGWSISGGTVTNPGIWSYEGVAGAHIVFSGLCFLAAIWHWVYWDLEIFCDERTGKPSLDLPKIFGIHLFLAGVACFGFGAFHVTGLYGPGIWVSDPYGLTGKVQAVNPAWGAEGFDPFVPGGIASHHIAAGTLGILAGLFHLSVRPPQRLYKGLRMGNIETVLSSSIAAVFFAAFVVAGTMWYGSATTPIELFGPTRYQWDQGYFQQEIYRRVSDGLAENLSLSEAWSKIPEKLAFYDYIGNNPAKGGLFRAGSMDNGDGIAVGWLGHPIFRDKEGRELFVRRMPTFFETFPVVLVDEEGIVRADVPFRRAESKYSVEQVGVTVEFYGGELNGVSYSDPATVKKYARRSQLGEIFELDRATLKSDGVFRSSPRGWFTFGHATFALLFFFGHIWHGARTLFRDVFAGIDPDLDAQVEFGTFQKVGDPTTRRQPV.

Transmembrane regions (helical) follow at residues 21–36, 101–115, 140–156, 203–218, 237–252, and 457–472; these read SVHI…WAGS, IVFS…IWHW, GIHL…FGAF, IAAG…FHLS, VLSS…AFVV, and TFAL…HGAR.

Belongs to the PsbB/PsbC family. PsbB subfamily. In terms of assembly, PSII is composed of 1 copy each of membrane proteins PsbA, PsbB, PsbC, PsbD, PsbE, PsbF, PsbH, PsbI, PsbJ, PsbK, PsbL, PsbM, PsbT, PsbX, PsbY, PsbZ, Psb30/Ycf12, at least 3 peripheral proteins of the oxygen-evolving complex and a large number of cofactors. It forms dimeric complexes. The cofactor is Binds multiple chlorophylls. PSII binds additional chlorophylls, carotenoids and specific lipids..

The protein resides in the plastid. It is found in the chloroplast thylakoid membrane. In terms of biological role, one of the components of the core complex of photosystem II (PSII). It binds chlorophyll and helps catalyze the primary light-induced photochemical processes of PSII. PSII is a light-driven water:plastoquinone oxidoreductase, using light energy to abstract electrons from H(2)O, generating O(2) and a proton gradient subsequently used for ATP formation. This Oryza nivara (Indian wild rice) protein is Photosystem II CP47 reaction center protein.